The chain runs to 138 residues: Large ribosomal subunit protein uL16 (138 aa).

Residues methionine 1 to glutamine 17 show a composition bias toward basic residues. The disordered stretch occupies residues methionine 1–serine 22.

It belongs to the universal ribosomal protein uL16 family. As to quaternary structure, part of the 50S ribosomal subunit.

Binds 23S rRNA and is also seen to make contacts with the A and possibly P site tRNAs. This chain is Large ribosomal subunit protein uL16, found in Mycobacterium tuberculosis (strain ATCC 25177 / H37Ra).